A 466-amino-acid chain; its full sequence is Uronate isomerase (466 aa).

This sequence belongs to the metallo-dependent hydrolases superfamily. Uronate isomerase family.

It catalyses the reaction D-glucuronate = D-fructuronate. The enzyme catalyses aldehydo-D-galacturonate = keto-D-tagaturonate. It participates in carbohydrate metabolism; pentose and glucuronate interconversion. This Brucella suis (strain ATCC 23445 / NCTC 10510) protein is Uronate isomerase.